Here is a 53-residue protein sequence, read N- to C-terminus: Large ribosomal subunit protein bL33A (53 aa).

This sequence belongs to the bacterial ribosomal protein bL33 family.

The protein is Large ribosomal subunit protein bL33A of Mycoplasmoides gallisepticum (strain R(low / passage 15 / clone 2)) (Mycoplasma gallisepticum).